A 1464-amino-acid chain; its full sequence is MSDKFKLLLKQIHFPQHEEAYNEIKSGSIESVKLFKSKRQWFFVFSFRNLLSYETFTLFDNLLHSSFDSLGAKVSYMINVEDISCDQSLLEAYFSYALDILKSSHFSIYSLFSNLGIEISNNSISVKAPAHILRENLHERFIALIADVLSNVGLSNVSISVLEDKEASSSLEEAYETNKISLQEEAESQARQALQSIVQSSPVPPPQKHQAQNFAEKQSQRVASFDKAEITPMIEVNSEENRIVFEGYIFDVEQRETKTGRIIINFKVTDYTSSFAMQRWVKDSEELVKFGMIKKGNWVRVRGRIENNPFTHSLTMNVQDIKEISHTPRKDLMPEGQKRVEFHAHTNMSTMDAIPTVEELIDTAAFWGHPAVAITDHANVQSFPHGYHKAKKAGIKAIFGLEANLVEDKVPIVYNSENLELKEATYVVFDVETTGLSAVHNDLIQIAASKMHKGNIVEQFDEFIDPGYPLSAFTTELTGITDNHVKGAKPLVQVLQEFQEFCKGAVLVAHNATFDVGFMNANYERHQLPTISQPVIDTLEFARNLYPEYKRHGLGPLTKRFGVALDHHHMANYDAEATGRLLFIFIKDVFEKHGLTNLEQLNTELVSDDSYKKSRVKHATLYVQNQTGLKNIFKLVSLSNVSYFEGVARIPRKVLDEYREGIIVGSACADGEVFDTLLSHGIDKAVEVAKYYDFIEVMPPAIYAPLIAKDLIKDEGAIEQLIRDLIEVANRLDKPVLATGNVHYINPEDAIYREIIVRALGQGAMINRPIGKEENAQPAPLPEAHFRTTNEMLDEFAFLGKDLAYEIVVANTQAMANQIEEVEVVKKDLYTPYIDRAEEQVAEMTYAKAFELYGNPLPDIIDLRIEKELSSILGNGFAVIYLASQMLVNRSNERGYLVGSRGSVGSSFVATMIGITEVNPMPPHYLCPKCQHSEFITDGSYGSGFDLPDKECSECGTEYKKDGQDIPFETFLGFDGDKVPDIDLNFSGDDQPSAHLDVRDIFGEQYAFRAGTVGTVADRTAYGFVKGYERDYNKFYRDAEVDRLAMGVAGVKRNTGQHPGGIVVIPNYMDVYDFTPVQYPADDVTAAWQTTHFNFHDIDENVLKLDILGHDDPTMIRKLQDLSGIDPKDIRADDPDVMKLFSGTEVLGVTPEQIGTSTGVLGIPEFGTNFVRGMVEETHPTTFAELLQLSGLSHGTDVWLGNAQDLIKEGIATLKTVIGCRDDIMVYLMHAGLDPKMAFTIMERVRKGMWLKISEEERNGYIQAMRENNVPDWYIESCGKIKYMFPKAHAAAYVMMALRVAYFKVHHPIYYYCAYFSIRAKAFELKTMSAGLDAVKARMEDIKEKRQRNEATNLENDLFTTLEIVNEMLERGFTFGQLDLYKSQATEFLIEGDTLIPPFIALEGLGENVAKQLVAAREEGEFLSKTELRKRGGLSSTLVERLDEMGILGNMPEDNQLSLFDDFF.

The Exonuclease domain maps to 426 to 582; it reads YVVFDVETTG…YDAEATGRLL (157 aa).

It belongs to the DNA polymerase type-C family. PolC subfamily.

The protein resides in the cytoplasm. It catalyses the reaction DNA(n) + a 2'-deoxyribonucleoside 5'-triphosphate = DNA(n+1) + diphosphate. Required for replicative DNA synthesis. This DNA polymerase also exhibits 3' to 5' exonuclease activity. The protein is DNA polymerase III PolC-type of Streptococcus thermophilus (strain CNRZ 1066).